The primary structure comprises 356 residues: ATP-dependent 6-phosphofructokinase (356 aa).

ATP contacts are provided by residues G15, 78–79 (KG), and 115–118 (GEGT). E116 lines the Mg(2+) pocket. Substrate contacts are provided by residues 138-140 (TID), R175, 182-184 (MGR), E235, R272, and 278-281 (HLQR). D140 acts as the Proton acceptor in catalysis.

This sequence belongs to the phosphofructokinase type A (PFKA) family. Mixed-substrate PFK group III subfamily. Homodimer or homotetramer. It depends on Mg(2+) as a cofactor.

The protein localises to the cytoplasm. The catalysed reaction is beta-D-fructose 6-phosphate + ATP = beta-D-fructose 1,6-bisphosphate + ADP + H(+). It participates in carbohydrate degradation; glycolysis; D-glyceraldehyde 3-phosphate and glycerone phosphate from D-glucose: step 3/4. Functionally, catalyzes the phosphorylation of D-fructose 6-phosphate to fructose 1,6-bisphosphate by ATP, the first committing step of glycolysis. The polypeptide is ATP-dependent 6-phosphofructokinase (Chloroflexus aurantiacus (strain ATCC 29366 / DSM 635 / J-10-fl)).